The primary structure comprises 179 residues: ATP synthase subunit delta (179 aa).

It belongs to the ATPase delta chain family. In terms of assembly, F-type ATPases have 2 components, F(1) - the catalytic core - and F(0) - the membrane proton channel. F(1) has five subunits: alpha(3), beta(3), gamma(1), delta(1), epsilon(1). F(0) has three main subunits: a(1), b(2) and c(10-14). The alpha and beta chains form an alternating ring which encloses part of the gamma chain. F(1) is attached to F(0) by a central stalk formed by the gamma and epsilon chains, while a peripheral stalk is formed by the delta and b chains.

The protein resides in the cell inner membrane. Functionally, f(1)F(0) ATP synthase produces ATP from ADP in the presence of a proton or sodium gradient. F-type ATPases consist of two structural domains, F(1) containing the extramembraneous catalytic core and F(0) containing the membrane proton channel, linked together by a central stalk and a peripheral stalk. During catalysis, ATP synthesis in the catalytic domain of F(1) is coupled via a rotary mechanism of the central stalk subunits to proton translocation. Its function is as follows. This protein is part of the stalk that links CF(0) to CF(1). It either transmits conformational changes from CF(0) to CF(1) or is implicated in proton conduction. The protein is ATP synthase subunit delta of Burkholderia lata (strain ATCC 17760 / DSM 23089 / LMG 22485 / NCIMB 9086 / R18194 / 383).